A 229-amino-acid chain; its full sequence is NAD-dependent protein deacetylase (229 aa).

One can recognise a Deacetylase sirtuin-type domain in the interval 1–229; the sequence is MNKLNEALKK…SDAVKVFEEI (229 aa). Positions 20, 32, 96, 98, 99, 114, 181, 182, 205, and 223 each coordinate NAD(+). 2 residues coordinate nicotinamide: Ile98 and Asp99. The Proton acceptor role is filled by His114.

This sequence belongs to the sirtuin family. Class U subfamily.

Its subcellular location is the cytoplasm. The enzyme catalyses N(6)-acetyl-L-lysyl-[protein] + NAD(+) + H2O = 2''-O-acetyl-ADP-D-ribose + nicotinamide + L-lysyl-[protein]. NAD-dependent protein deacetylase which modulates the activities of several enzymes which are inactive in their acetylated form. The protein is NAD-dependent protein deacetylase of Listeria monocytogenes serovar 1/2a (strain ATCC BAA-679 / EGD-e).